We begin with the raw amino-acid sequence, 431 residues long: 3-phosphoshikimate 1-carboxyvinyltransferase (431 aa).

3 residues coordinate 3-phosphoshikimate: lysine 20, serine 21, and arginine 25. Lysine 20 provides a ligand contact to phosphoenolpyruvate. Residues glycine 91 and arginine 119 each coordinate phosphoenolpyruvate. Serine 164, glutamine 166, aspartate 317, and lysine 344 together coordinate 3-phosphoshikimate. Glutamine 166 provides a ligand contact to phosphoenolpyruvate. Aspartate 317 serves as the catalytic Proton acceptor. Arginine 348 and arginine 390 together coordinate phosphoenolpyruvate.

It belongs to the EPSP synthase family. As to quaternary structure, monomer.

Its subcellular location is the cytoplasm. It catalyses the reaction 3-phosphoshikimate + phosphoenolpyruvate = 5-O-(1-carboxyvinyl)-3-phosphoshikimate + phosphate. Its pathway is metabolic intermediate biosynthesis; chorismate biosynthesis; chorismate from D-erythrose 4-phosphate and phosphoenolpyruvate: step 6/7. Its function is as follows. Catalyzes the transfer of the enolpyruvyl moiety of phosphoenolpyruvate (PEP) to the 5-hydroxyl of shikimate-3-phosphate (S3P) to produce enolpyruvyl shikimate-3-phosphate and inorganic phosphate. The sequence is that of 3-phosphoshikimate 1-carboxyvinyltransferase from Aquifex aeolicus (strain VF5).